The following is a 364-amino-acid chain: MGILEKISEIEKEIARTQKNKATEYHLGLLKAKLAKYRAQLLEPSKSASSKGEGFDVMKSGDARVALIGFPSVGKSTFLSLMTSTASEAASYEFTTLTCIPGVIEYKGANIQLLDLPGIIEGAAQGKGRGRQVIAVARTADVIIMMLDATKGEVQRSLLEKELESVGIRLNKHKPNIYFKPKKGGGISFNSTVTLTQCSEKLVQLILHEYKIFNAEVLFREDCSPDEFIDVIVGNRVYMPCLYVYNKIDQISMEEVDRLARKPNSVVISCGMKLNLDYLLEMLWEYLALTCIYTKKRGQRPDFTDAIILRKGASVEHVCHRIHRSLASQFKYALVWGTSTKYSPQRVGLTHTMEHEDVIQIVKK.

Lys21 carries the (3S)-3-hydroxylysine modification. Positions 63 to 288 constitute an OBG-type G domain; that stretch reads ARVALIGFPS…LLEMLWEYLA (226 aa). Residues 69–76, 94–98, 115–118, 246–249, and 269–271 each bind GTP; these read GFPSVGKS, FTTLT, DLPG, NKID, and SCG. Mg(2+) is bound by residues Ser76 and Thr96. The TGS domain occupies 288–363; that stretch reads ALTCIYTKKR…EHEDVIQIVK (76 aa).

The protein belongs to the TRAFAC class OBG-HflX-like GTPase superfamily. OBG GTPase family. In terms of assembly, interacts with RWDD1; this interaction confers protection to polyubiquitination and proteolytic degradation. Interacts with JMJD7; this interaction is direct. Mg(2+) serves as cofactor. In terms of processing, hydroxylated (with S stereochemistry) at C-3 of Lys-21 by JMJD7; this modification hinders trypsin-catalyzed proteolysis in vitro. Post-translationally, polyubiquitinated. In terms of tissue distribution, highest levels in skeletal muscle, heart and kidney. Low levels in colon, thymus, spleen, small intestine, lung and Leukocytes.

It localises to the nucleus. The protein localises to the cytoplasm. The catalysed reaction is GTP + H2O = GDP + phosphate + H(+). Its function is as follows. Catalyzes the conversion of GTP to GDP through hydrolysis of the gamma-phosphate bond in GTP. When hydroxylated at C-3 of 'Lys-21' by JMJD7, may bind to RNA and play a role in translation. The chain is Developmentally-regulated GTP-binding protein 2 from Homo sapiens (Human).